The chain runs to 381 residues: MSSYRPYQHIERRKSRQIHVGKVAVGGDAPISVQTMTNTLTSDAQATIEQIRRAELAGVDIVRVSCPDEASTAALEEIVREVNVPIVADIHFHYKRAIEAAKAGAACLRINPGNIGSAERVREVVNAARDYGCSIRIGVNAGSLEKHLLEKYGEPNPEALVESALEHAKILEDHDFHEFKISVKASDVFMAVAAYQQLADCCDHPLHIGITEAGSKRAGTVKSSIGLGNLLWAGVGDTMRVSLSAAPEEEVLVGWDILKSLGLRHRGVKIISCPSCARQGFNVVETVQTLEDRLQHIKTPLTLSIIGCVVNGPGEALMTDIGVTGGGNGRHMVYAAGRQDHTMPAGDMIEHIVELVEKKVSDIEAGKVEASTAKQMDPAAS.

4 residues coordinate [4Fe-4S] cluster: cysteine 273, cysteine 276, cysteine 308, and glutamate 315.

The protein belongs to the IspG family. It depends on [4Fe-4S] cluster as a cofactor.

The enzyme catalyses (2E)-4-hydroxy-3-methylbut-2-enyl diphosphate + oxidized [flavodoxin] + H2O + 2 H(+) = 2-C-methyl-D-erythritol 2,4-cyclic diphosphate + reduced [flavodoxin]. It functions in the pathway isoprenoid biosynthesis; isopentenyl diphosphate biosynthesis via DXP pathway; isopentenyl diphosphate from 1-deoxy-D-xylulose 5-phosphate: step 5/6. Its function is as follows. Converts 2C-methyl-D-erythritol 2,4-cyclodiphosphate (ME-2,4cPP) into 1-hydroxy-2-methyl-2-(E)-butenyl 4-diphosphate. This Gluconobacter oxydans (strain 621H) (Gluconobacter suboxydans) protein is 4-hydroxy-3-methylbut-2-en-1-yl diphosphate synthase (flavodoxin).